A 93-amino-acid polypeptide reads, in one-letter code: Alpha-defensin 9 (93 aa).

The N-terminal stretch at 1–19 (MKTLVLLSALVLLAFQVQA) is a signal peptide. A propeptide spanning residues 20 to 58 (DPIQNTDEETKTEEQPGEEDQAVSVSFGDPEGSSLQEES) is cleaved from the precursor. The tract at residues 23–56 (QNTDEETKTEEQPGEEDQAVSVSFGDPEGSSLQE) is disordered. Disulfide bonds link Cys-64–Cys-92, Cys-66–Cys-81, and Cys-71–Cys-91.

The protein belongs to the alpha-defensin family. As to expression, paneth cells of the small bowel.

The protein localises to the secreted. In terms of biological role, probably contributes to the antimicrobial barrier function of the small bowel mucosa. This Mus musculus (Mouse) protein is Alpha-defensin 9 (Defa9).